We begin with the raw amino-acid sequence, 783 residues long: Galactinol--sucrose galactosyltransferase (783 aa).

This sequence belongs to the glycosyl hydrolases 36 family.

The catalysed reaction is alpha-D-galactosyl-(1-&gt;3)-1D-myo-inositol + sucrose = raffinose + myo-inositol. With respect to regulation, inhibited by Ag(2)+, Hg(2+), Zn(2+), p-chloromercuribenzoate (pCMB) and 1-deoxygalactonojirimycin. Transglycosidase operating by a ping-pong reaction mechanism. Involved in the synthesis of raffinose, a major soluble carbohydrate in seeds, roots and tubers. Specific for galactinol and p-nitrophenyl-alpha-D-galactoside as galactosyl donors. Able to utilize sucrose, lactose, 4-beta-galactobiose, N-acetyl-D-lactosamine, trehalose and lacto-N-biose as acceptors. May also act as a glycoside hydrolase. This is Galactinol--sucrose galactosyltransferase (RFS) from Oryza sativa subsp. japonica (Rice).